The primary structure comprises 252 residues: Type IV pilus assembly protein PilF (252 aa).

Positions 1–17 (MTVRAALVFLLAVGLTG) are cleaved as a signal peptide. Residue C18 is the site of N-palmitoyl cysteine attachment. C18 carries the S-diacylglycerol cysteine lipid modification. 6 TPR repeats span residues 32 to 67 (GRDE…LEID), 84 to 101 (EMEP…LASD), 104 to 133 (NARV…EASQ), 139 to 171 (ERSR…LRLN), 174 to 203 (QPSV…LFAQ), and 208 to 235 (NARS…GLQL).

As to quaternary structure, interacts with PilQ; this interaction is essential for assemby of PilQ into secretins.

Its subcellular location is the cell outer membrane. In terms of biological role, essential component of the type IV pilus (T4P) that plays a role in surface and host cell adhesion, colonization, biofilm maturation, virulence, and twitching, a form of surface-associated motility facilitated by cycles of extension, adhesion, and retraction of T4P fibers. Plays an essential role in the outer membrane localization and assembly of PilQ into secretins which are dodecamers of PilQ. This Pseudomonas aeruginosa (strain ATCC 15692 / DSM 22644 / CIP 104116 / JCM 14847 / LMG 12228 / 1C / PRS 101 / PAO1) protein is Type IV pilus assembly protein PilF (pilF).